The primary structure comprises 273 residues: Dermonecrotic toxin LdSicTox-alphaIB1bii (273 aa).

Residue His-5 is part of the active site. 2 residues coordinate Mg(2+): Glu-25 and Asp-27. The active-site Nucleophile is the His-41. Disulfide bonds link Cys-45/Cys-51 and Cys-47/Cys-190. Asp-85 contributes to the Mg(2+) binding site. N-linked (GlcNAc...) asparagine glycosylation occurs at Asn-250.

The protein belongs to the arthropod phospholipase D family. Class II subfamily. The cofactor is Mg(2+). As to expression, expressed by the venom gland.

The protein resides in the secreted. The enzyme catalyses an N-(acyl)-sphingosylphosphocholine = an N-(acyl)-sphingosyl-1,3-cyclic phosphate + choline. It catalyses the reaction an N-(acyl)-sphingosylphosphoethanolamine = an N-(acyl)-sphingosyl-1,3-cyclic phosphate + ethanolamine. It carries out the reaction a 1-acyl-sn-glycero-3-phosphocholine = a 1-acyl-sn-glycero-2,3-cyclic phosphate + choline. The catalysed reaction is a 1-acyl-sn-glycero-3-phosphoethanolamine = a 1-acyl-sn-glycero-2,3-cyclic phosphate + ethanolamine. Functionally, dermonecrotic toxins cleave the phosphodiester linkage between the phosphate and headgroup of certain phospholipids (sphingolipid and lysolipid substrates), forming an alcohol (often choline) and a cyclic phosphate. This toxin acts on sphingomyelin (SM). It may also act on ceramide phosphoethanolamine (CPE), lysophosphatidylcholine (LPC) and lysophosphatidylethanolamine (LPE), but not on lysophosphatidylserine (LPS), and lysophosphatidylglycerol (LPG). It acts by transphosphatidylation, releasing exclusively cyclic phosphate products as second products. Induces dermonecrosis, hemolysis, increased vascular permeability, edema, inflammatory response, and platelet aggregation. The chain is Dermonecrotic toxin LdSicTox-alphaIB1bii from Loxosceles deserta (Desert recluse spider).